A 98-amino-acid polypeptide reads, in one-letter code: DNA-directed RNA polymerase subunit omega (98 aa).

Belongs to the RNA polymerase subunit omega family. As to quaternary structure, the RNAP catalytic core consists of 2 alpha, 1 beta, 1 beta' and 1 omega subunit. When a sigma factor is associated with the core the holoenzyme is formed, which can initiate transcription.

The enzyme catalyses RNA(n) + a ribonucleoside 5'-triphosphate = RNA(n+1) + diphosphate. Its function is as follows. Promotes RNA polymerase assembly. Latches the N- and C-terminal regions of the beta' subunit thereby facilitating its interaction with the beta and alpha subunits. The sequence is that of DNA-directed RNA polymerase subunit omega from Tropheryma whipplei (strain Twist) (Whipple's bacillus).